A 170-amino-acid chain; its full sequence is Protein AIG2 A (170 aa).

Residue 15 to 20 (YGSFQE) participates in substrate binding. Glutamate 83 serves as the catalytic Proton acceptor. A compositionally biased stretch (basic and acidic residues) spans 147 to 162 (KNPNGRSREEFEKFVQ). The interval 147–170 (KNPNGRSREEFEKFVQDDSSPASA) is disordered.

Belongs to the gamma-glutamylcyclotransferase family. Ubiquitous.

Its function is as follows. Putative gamma-glutamylcyclotransferase. The protein is Protein AIG2 A of Arabidopsis thaliana (Mouse-ear cress).